An 85-amino-acid chain; its full sequence is Oxytocin-neurophysin 1 (85 aa).

Gly3 is subject to Glycine amide. Disulfide bonds link Cys16/Cys60, Cys19/Cys33, Cys27/Cys50, Cys34/Cys40, Cys67/Cys79, and Cys80/Cys85.

This sequence belongs to the vasopressin/oxytocin family. In terms of assembly, interacts with oxytocin receptor (Ki=1.5 nM). Interacts with vasopressin V1aR/AVPR1A (Ki=37 nM), V1bR/AVPR1B (Ki=222 nM), and V2R/AVPR2 receptors (Ki=823 nM).

Functionally, neurophysin 1 specifically binds oxytocin. In terms of biological role, oxytocin causes contraction of the smooth muscle of the uterus and of the mammary gland. Acts by binding to oxytocin receptor (OXTR). This is Oxytocin-neurophysin 1 (OXT) from Papio hamadryas (Hamadryas baboon).